The sequence spans 329 residues: Serpentine receptor class alpha-6 (329 aa).

The next 7 membrane-spanning stretches (helical) occupy residues 26 to 46 (VDLL…KIVI), 68 to 88 (LYQI…FFML), 104 to 124 (YFKV…GLLI), 143 to 163 (IGVC…FIIL), 187 to 207 (NLFS…SIFI), 238 to 258 (ICFL…GILI), and 273 to 293 (FWIA…VLLI).

The protein belongs to the nematode receptor-like protein sra family.

The protein resides in the membrane. The chain is Serpentine receptor class alpha-6 (sra-6) from Caenorhabditis elegans.